The chain runs to 197 residues: Protein lin-7 homolog C (197 aa).

Residue Ala2 is modified to N-acetylalanine. The Kinase interacting site motif lies at 2–13 (AALGEPVRLERD). The L27 domain maps to 10 to 65 (LERDICRAIELLEKLQRSGEVPPQKLQALQRVLQSEFCNAVREVYEHVYETVDISS). The 83-residue stretch at 93 to 175 (VVELPKTEEG…KVKLVVRYTP (83 aa)) folds into the PDZ domain.

Belongs to the lin-7 family. Forms a complex with CASK and APBA1 or CASKIN1. Component of the brain-specific heterotrimeric complex (LIN-10-LIN-2-LIN-7 complex) composed of at least APBA1, CASK, and LIN7, which associates with the motor protein KIF17 to transport vesicles along microtubules. Can also interact with other modular proteins containing protein-protein interaction domains like PALS1, PALS2, MPP7, DLG1, DLG2 and DLG3 through its L27 domain. Interacts with DLG4 and GRIN2B as well as CDH1 and CTNNB1, the channels KCNJ12/Kir2.2, KCNJ4/Kir2.3 and probably KCNJ2/Kir2.1 and SLC6A12/BGT-1 via its PDZ domain. The association of LIN7A with cadherin and beta-catenin is calcium-dependent, occurs at synaptic junctions and requires the actin cytoskeleton. Interacts with EGFR, ERBB2, ERBB3 and ERBB4 with both PDZ and KID domains. Associates with KIF17 via APBA1. Interacts with HTR4. Forms a tripartite complex composed of DLG1, MPP7 and LIN7 (LIN7A or LIN7C). Interacts with MAPK12.

It localises to the cell membrane. The protein resides in the basolateral cell membrane. The protein localises to the cell junction. Its subcellular location is the postsynaptic density membrane. It is found in the tight junction. It localises to the synapse. The protein resides in the synaptosome. In terms of biological role, plays a role in establishing and maintaining the asymmetric distribution of channels and receptors at the plasma membrane of polarized cells. Forms membrane-associated multiprotein complexes that may regulate delivery and recycling of proteins to the correct membrane domains. The tripartite complex composed of LIN7 (LIN7A, LIN7B or LIN7C), CASK and APBA1 associates with the motor protein KIF17 to transport vesicles containing N-methyl-D-aspartate (NMDA) receptor subunit NR2B along microtubules. This complex may have the potential to couple synaptic vesicle exocytosis to cell adhesion in brain. Ensures the proper localization of GRIN2B (subunit 2B of the NMDA receptor) to neuronal postsynaptic density and may function in localizing synaptic vesicles at synapses where it is recruited by beta-catenin and cadherin. Required to localize Kir2 channels, GABA transporter (SLC6A12) and EGFR/ERBB1, ERBB2, ERBB3 and ERBB4 to the basolateral membrane of epithelial cells. This Bos taurus (Bovine) protein is Protein lin-7 homolog C (LIN7C).